Here is a 198-residue protein sequence, read N- to C-terminus: dTTP/UTP pyrophosphatase (198 aa).

Aspartate 75 functions as the Proton acceptor in the catalytic mechanism.

Belongs to the Maf family. YhdE subfamily. A divalent metal cation is required as a cofactor.

It is found in the cytoplasm. The catalysed reaction is dTTP + H2O = dTMP + diphosphate + H(+). The enzyme catalyses UTP + H2O = UMP + diphosphate + H(+). Its function is as follows. Nucleoside triphosphate pyrophosphatase that hydrolyzes dTTP and UTP. May have a dual role in cell division arrest and in preventing the incorporation of modified nucleotides into cellular nucleic acids. This is dTTP/UTP pyrophosphatase from Wolbachia pipientis wMel.